The primary structure comprises 589 residues: UvrABC system protein C (589 aa).

The GIY-YIG domain maps to 14–91 (HKPGCYLWKD…IAKYKPKYNM (78 aa)).

This sequence belongs to the UvrC family. In terms of assembly, interacts with UvrB in an incision complex.

Its subcellular location is the cytoplasm. Its function is as follows. The UvrABC repair system catalyzes the recognition and processing of DNA lesions. UvrC both incises the 5' and 3' sides of the lesion. The N-terminal half is responsible for the 3' incision and the C-terminal half is responsible for the 5' incision. The chain is UvrABC system protein C from Malacoplasma penetrans (strain HF-2) (Mycoplasma penetrans).